Reading from the N-terminus, the 211-residue chain is Thiamine-phosphate synthase (211 aa).

Residues 38-42 (QLREK) and asparagine 70 each bind 4-amino-2-methyl-5-(diphosphooxymethyl)pyrimidine. Aspartate 71 and aspartate 90 together coordinate Mg(2+). Serine 109 is a 4-amino-2-methyl-5-(diphosphooxymethyl)pyrimidine binding site. Position 135-137 (135-137 (TST)) interacts with 2-[(2R,5Z)-2-carboxy-4-methylthiazol-5(2H)-ylidene]ethyl phosphate. Residue lysine 138 coordinates 4-amino-2-methyl-5-(diphosphooxymethyl)pyrimidine. Residues glycine 165 and 185-186 (IS) each bind 2-[(2R,5Z)-2-carboxy-4-methylthiazol-5(2H)-ylidene]ethyl phosphate.

Belongs to the thiamine-phosphate synthase family. Requires Mg(2+) as cofactor.

It catalyses the reaction 2-[(2R,5Z)-2-carboxy-4-methylthiazol-5(2H)-ylidene]ethyl phosphate + 4-amino-2-methyl-5-(diphosphooxymethyl)pyrimidine + 2 H(+) = thiamine phosphate + CO2 + diphosphate. The enzyme catalyses 2-(2-carboxy-4-methylthiazol-5-yl)ethyl phosphate + 4-amino-2-methyl-5-(diphosphooxymethyl)pyrimidine + 2 H(+) = thiamine phosphate + CO2 + diphosphate. It carries out the reaction 4-methyl-5-(2-phosphooxyethyl)-thiazole + 4-amino-2-methyl-5-(diphosphooxymethyl)pyrimidine + H(+) = thiamine phosphate + diphosphate. Its pathway is cofactor biosynthesis; thiamine diphosphate biosynthesis; thiamine phosphate from 4-amino-2-methyl-5-diphosphomethylpyrimidine and 4-methyl-5-(2-phosphoethyl)-thiazole: step 1/1. In terms of biological role, condenses 4-methyl-5-(beta-hydroxyethyl)thiazole monophosphate (THZ-P) and 2-methyl-4-amino-5-hydroxymethyl pyrimidine pyrophosphate (HMP-PP) to form thiamine monophosphate (TMP). In Clostridium acetobutylicum (strain ATCC 824 / DSM 792 / JCM 1419 / IAM 19013 / LMG 5710 / NBRC 13948 / NRRL B-527 / VKM B-1787 / 2291 / W), this protein is Thiamine-phosphate synthase.